The chain runs to 157 residues: Endosomal/vacuolar adapter protein YPT35 (157 aa).

Residues 43–157 enclose the PX domain; sequence ITDVLVGDYH…SPVITHFILN (115 aa).

The protein belongs to the YPT35 family.

The protein localises to the endosome membrane. It is found in the vacuole membrane. Its function is as follows. Recruits the lipid transfer protein VPS13 to endosomal and vacuolar membranes. The chain is Endosomal/vacuolar adapter protein YPT35 (YPT35) from Debaryomyces hansenii (strain ATCC 36239 / CBS 767 / BCRC 21394 / JCM 1990 / NBRC 0083 / IGC 2968) (Yeast).